A 1471-amino-acid polypeptide reads, in one-letter code: MSHARLSVGSECWVSNNNGHWDAARLIEIKDNGGGKVVATVAKSSGVLETVNYQQLQNRNIGQSESPSDLTNLPYLNEPSVLHALHNRYNNKQIYTYSGIVLVSINPYQNLPEFYNDNLIKHFHKDPEAAKVPHLYSIASSCYHALTTDSKNQTIIVSGESGAGKTVAAKYIMRYLTSVQGVDHNGVVKRSVENQVLATNPIMEAFGNAKTIRNDNSSRFGKYVTISFDENLLITGANVNTYLLERSRVVSLLKGERNYHIFYQLITGCTEEQRDKWFLESASSFNYLSQGNCDEISGVDDSNDFTITCRALSTIGISESRQEDVFCLLAALLHLGNIEVCATRNEAQIQPGDGYLQKAALLLGVDSSTLAKWIVKRQLKTRSETIITSSTLEHAISIRDSVAKYLYSALFLWIVHMINASLDHNKVKRAAYKYIGVVDIYGFEHFEKNSMEQFCINYANEKLQQEFNKHVFKLEQEEYVKEGLDWRLIEYSDNQGCISLIEDKLGILSLLDEECRLPSGNHQSFLQKLNNQLPTKHSQFYKKSRFNDGSFMVKHYALDVSYQVHDFLAKNSDAIPDEFISLLQNSKNEFITYLLDFYMQLVSSQNKNPRKTAISRKPTLSSMFKSSLSQLMTTVSSTNVHYIRCIKPNEEKLPWTFSPPMVLSQLRACGVFETIRISSLGFPARFSYEEFAHRFRILLSSKEWEEDNKKLTLNIVNSVIPHDNLNFQVGRSKIFFRSNVIGNFEEAHRATCSKSTVLLQSAIRGFFTRKEYQRTVKFIIKLQSVIMGWLTRQRFEREKIERAAILIQAHWRSYIQRKRYLSLIKCAIVIQSIVRKNIAYSRYINELRESSATLLAKFWRAYNARKTFRGLKKSVIALQCVSRSVLTRRYLRRLQDSAGRTSILYEKQKNLQASITEVSKQLKSNSKKVTVLRNKLNILNNSLSKWKCLIKKPSDFSEPVSMDFTSNDEQLVQLLQAESKLRQASQQLYMAAKKSELGFVQSQTARENLSNYYQALQMTVSEKFEYDTEQLPSRVLFYAMDRYFSIHKKLKQLLELVGVENASLLPNEVVNKQTKDLLYEKRVVFLKQIKQALTVSSLFNAVGYKDGVMRLLETDQNSLLFAGVVNFLIFAGISLDLKTQISEFLSQLCSYFTKIVDGTVIENDKTLDFYEKPLQAVLYWFATLHKIRSFLVHLLSINSHGKQSVVEDLWNPLILKFSKHFSNLENSFHSLVQKLLSCCTEGSINALLNSKCLPEFIDAADENTTPTGMNIYELIDRMNLIHKLLISSALQPNLLELTISHMLQHIGQRAFQTLIHGRSPYTWKSASQVSYNASLLINWCHQKGISYVNSSLLPLMQSPLVFCLRKNDANDLDVILSVCNLLSPFEVVCLLNRYQPCAGENPLPKSFSKAVEALSCKYKQSGFTNGKITNTNGHAIPIAASKNPLLSLENNHIYEELRLSELINLLAKATL.

Residues 7-61 (SVGSECWVSNNNGHWDAARLIEIKDNGGGKVVATVAKSSGVLETVNYQQLQNRNI) enclose the Myosin N-terminal SH3-like domain. The Myosin motor domain maps to 65–749 (ESPSDLTNLP…VIGNFEEAHR (685 aa)). 159–166 (GESGAGKT) lines the ATP pocket. An actin-binding region spans residues 628–650 (LSQLMTTVSSTNVHYIRCIKPNE). 6 consecutive IQ domains span residues 753–773 (SKST…KEYQ), 776–796 (VKFI…QRFE), 801–821 (ERAA…KRYL), 824–844 (IKCA…SRYI), 849–869 (ESSA…KTFR), and 872–892 (KKSV…RYLR). Residues 909-952 (KNLQASITEVSKQLKSNSKKVTVLRNKLNILNNSLSKWKCLIKK) are a coiled coil. Residues 1171-1417 (EKPLQAVLYW…SKAVEALSCK (247 aa)) form the Dilute domain.

Belongs to the TRAFAC class myosin-kinesin ATPase superfamily. Myosin family.

The protein localises to the cytoplasm. In terms of biological role, involved in cytokinesis. This is Myosin-51 (myo51) from Schizosaccharomyces pombe (strain 972 / ATCC 24843) (Fission yeast).